The sequence spans 440 residues: Damage-control phosphatase ARMT1 (440 aa).

The Mn(2+) site is built by D252 and N253. A substrate-binding site is contributed by 252 to 253; sequence DN. 2 residues coordinate S-adenosyl-L-methionine: E257 and D290. A Mn(2+)-binding site is contributed by D290. Substrate contacts are provided by residues 366–370 and K403; that span reads DLNYR. The short motif at 400–403 is the Subfamily III RTxK motif element; it reads RTLK.

This sequence belongs to the damage-control phosphatase family. Sugar phosphate phosphatase III subfamily. The cofactor is Mn(2+). Ni(2+) serves as cofactor. Post-translationally, automethylated.

It catalyses the reaction beta-D-fructose 1-phosphate + H2O = D-fructose + phosphate. It carries out the reaction beta-D-fructose 6-phosphate = dihydroxyacetone + D-glyceraldehyde 3-phosphate. The enzyme catalyses L-glutamyl-[protein] + S-adenosyl-L-methionine = [protein]-L-glutamate 5-O-methyl ester + S-adenosyl-L-homocysteine. Functionally, metal-dependent phosphatase that shows phosphatase activity against several substrates, including fructose-1-phosphate and fructose-6-phosphate. Its preference for fructose-1-phosphate, a strong glycating agent that causes DNA damage rather than a canonical yeast metabolite, suggests a damage-control function in hexose phosphate metabolism. Has also been shown to have O-methyltransferase activity that methylates glutamate residues of target proteins to form gamma-glutamyl methyl ester residues. Possibly methylates PCNA, suggesting it is involved in the DNA damage response. This is Damage-control phosphatase ARMT1 from Xenopus tropicalis (Western clawed frog).